Consider the following 179-residue polypeptide: Large ribosomal subunit protein uL6 (179 aa).

The protein belongs to the universal ribosomal protein uL6 family. Part of the 50S ribosomal subunit.

Functionally, this protein binds to the 23S rRNA, and is important in its secondary structure. It is located near the subunit interface in the base of the L7/L12 stalk, and near the tRNA binding site of the peptidyltransferase center. In Bifidobacterium animalis subsp. lactis (strain AD011), this protein is Large ribosomal subunit protein uL6.